Here is a 309-residue protein sequence, read N- to C-terminus: Taste receptor type 2 member 46 (309 aa).

Met1 is a topological domain (extracellular). The chain crosses the membrane as a helical span at residues 2–22; that stretch reads ITFLPIIFSILIVVTFVIGNF. Residues 23-46 lie on the Cytoplasmic side of the membrane; it reads ANGFIALVNSIEWFKRQKISFADQ. The chain crosses the membrane as a helical span at residues 47 to 67; sequence ILTALAVSRVGLLWVLVLNWY. Residues 68–86 lie on the Extracellular side of the membrane; the sequence is ATELNPAFNSIEVRITAYN. Residues 87-107 traverse the membrane as a helical segment; sequence VWAVINHFSNWLATSLSIFYL. Topologically, residues 108-126 are cytoplasmic; it reads LKIANFSNLIFLHLKRRVK. A helical membrane pass occupies residues 127 to 147; the sequence is SVVLVILLGPLLFLVCHLFVI. Topologically, residues 148 to 178 are extracellular; that stretch reads NMNQIIWTKEYEGNMTWKIKLRSAMYLSNTT. N-linked (GlcNAc...) asparagine glycosylation is found at Asn161 and Asn176. A helical membrane pass occupies residues 179 to 199; that stretch reads VTILANLVPFTLTLISFLLLI. Residues 200-229 lie on the Cytoplasmic side of the membrane; the sequence is CSLCKHLKKMQLHGKGSQDPSMKVHIKALQ. The helical transmembrane segment at 230 to 250 threads the bilayer; that stretch reads TVTSFLLLCAIYFLSIIMSVW. Over 251–259 the chain is Extracellular; that stretch reads SFESLENKP. Residues 260-280 traverse the membrane as a helical segment; that stretch reads VFMFCEAIAFSYPSTHPFILI. Residues 281–309 are Cytoplasmic-facing; the sequence is WGNKKLKQTFLSVLWHVRYWVKGEKPSSS.

The protein belongs to the G-protein coupled receptor T2R family. In terms of tissue distribution, expressed in subsets of taste receptor cells of the tongue and exclusively in gustducin-positive cells. Expressed on ciliated airway epithelium.

It localises to the membrane. Its subcellular location is the cell projection. The protein localises to the cilium membrane. Its function is as follows. Receptor that may play a role in the perception of bitterness and is gustducin-linked. May play a role in sensing the chemical composition of the gastrointestinal content. The activity of this receptor may stimulate alpha gustducin, mediate PLC-beta-2 activation and lead to the gating of TRPM5. In airway epithelial cells, binding of bitter compounds increases the intracellular calcium ion concentration and stimulates ciliary beat frequency. The chain is Taste receptor type 2 member 46 (TAS2R46) from Homo sapiens (Human).